Consider the following 390-residue polypeptide: S-adenosylmethionine synthase 4 (390 aa).

A Mg(2+)-binding site is contributed by Glu9. His15 provides a ligand contact to ATP. Residue Glu43 participates in K(+) binding. Residues Glu56 and Gln99 each coordinate L-methionine. ATP contacts are provided by residues 167–169 (DGK), 235–238 (SGRF), Asp246, 252–253 (RK), Ala269, Lys273, and Lys277. Asp246 contributes to the L-methionine binding site. Lys277 contacts L-methionine.

This sequence belongs to the AdoMet synthase family. As to quaternary structure, homotetramer. Mn(2+) is required as a cofactor. Mg(2+) serves as cofactor. It depends on Co(2+) as a cofactor. The cofactor is K(+).

It is found in the cytoplasm. It catalyses the reaction L-methionine + ATP + H2O = S-adenosyl-L-methionine + phosphate + diphosphate. It functions in the pathway amino-acid biosynthesis; S-adenosyl-L-methionine biosynthesis; S-adenosyl-L-methionine from L-methionine: step 1/1. Its function is as follows. Catalyzes the formation of S-adenosylmethionine from methionine and ATP. The reaction comprises two steps that are both catalyzed by the same enzyme: formation of S-adenosylmethionine (AdoMet) and triphosphate, and subsequent hydrolysis of the triphosphate. This Populus trichocarpa (Western balsam poplar) protein is S-adenosylmethionine synthase 4 (METK4).